The sequence spans 183 residues: UPF0200 protein MmarC6_1392 (183 aa).

8–15 (GMPGSGKS) provides a ligand contact to ATP.

Belongs to the UPF0200 family.

The chain is UPF0200 protein MmarC6_1392 from Methanococcus maripaludis (strain C6 / ATCC BAA-1332).